Reading from the N-terminus, the 75-residue chain is Small ribosomal subunit protein bS18 (75 aa).

Belongs to the bacterial ribosomal protein bS18 family. Part of the 30S ribosomal subunit. Forms a tight heterodimer with protein bS6.

Its function is as follows. Binds as a heterodimer with protein bS6 to the central domain of the 16S rRNA, where it helps stabilize the platform of the 30S subunit. The sequence is that of Small ribosomal subunit protein bS18 from Baumannia cicadellinicola subsp. Homalodisca coagulata.